A 91-amino-acid polypeptide reads, in one-letter code: Large ribosomal subunit protein eL43 (91 aa).

The C4-type zinc-finger motif lies at 39 to 60 (CSFCGKEAMKRKATGIWNCAKC).

It belongs to the eukaryotic ribosomal protein eL43 family.

This is Large ribosomal subunit protein eL43 from Caenorhabditis elegans.